The primary structure comprises 510 residues: 2,3-bisphosphoglycerate-independent phosphoglycerate mutase (510 aa).

Positions 14 and 64 each coordinate Mn(2+). Catalysis depends on Ser64, which acts as the Phosphoserine intermediate. Substrate-binding positions include His125, 155–156, Arg187, Arg193, 259–262, and Lys332; these read RD and RADR. Positions 399, 403, 440, 441, and 459 each coordinate Mn(2+).

This sequence belongs to the BPG-independent phosphoglycerate mutase family. As to quaternary structure, monomer. Mn(2+) is required as a cofactor.

It carries out the reaction (2R)-2-phosphoglycerate = (2R)-3-phosphoglycerate. It functions in the pathway carbohydrate degradation; glycolysis; pyruvate from D-glyceraldehyde 3-phosphate: step 3/5. Its function is as follows. Catalyzes the interconversion of 2-phosphoglycerate and 3-phosphoglycerate. The chain is 2,3-bisphosphoglycerate-independent phosphoglycerate mutase from Pseudomonas syringae pv. syringae (strain B728a).